The primary structure comprises 390 residues: Protein snail (390 aa).

The tract at residues 1–20 is SNAG domain; the sequence is MAANYKSCPLKKRPIVFVEE. Disordered regions lie at residues 29–65 and 162–191; these read ALTKDSQFAQDQPQDLSLKRGRDEETQDYQQPEPKRD and QSVYSYQQMTPPSSPGSDLETGSEPEDLSV. Composition is skewed to polar residues over residues 32-43 and 162-172; these read KDSQFAQDQPQD and QSVYSYQQMTP. 5 C2H2-type zinc fingers span residues 245-267, 280-302, 306-328, 334-356, and 362-385; these read FKCDECQKMYSTSMGLSKHRQFH, HSCEECGKLYTTIGALKMHIRTH, CKCPICGKAFSRPWLLQGHIRTH, FQCPDCPRSFADRSNLRAHQQTH, and YACQVCHKSFSRMSLLNKHSSSNC.

This sequence belongs to the snail C2H2-type zinc-finger protein family.

The protein resides in the nucleus. Functionally, essential for the correct specification of ventral-dorsal patterns. The chain is Protein snail (sna) from Drosophila melanogaster (Fruit fly).